The following is a 372-amino-acid chain: Tomoregulin-1 (372 aa).

Positions 1–36 (MGAQAPLRLPAAPPLAVCGYTSVLLLFAFCLPGSRA) are cleaved as a signal peptide. Topologically, residues 37–322 (SNQPAGGGGD…VPSRQKLTHV (286 aa)) are extracellular. Residue Asn55 is glycosylated (N-linked (GlcNAc...) asparagine). Residues 90–137 (ACQFQCHTNYIPVCGSNGDTYQNECFLRRAACKHQKDITVVARGPCYS) enclose the Kazal-like 1 domain. 3 disulfide bridges follow: Cys91–Cys121, Cys95–Cys114, and Cys103–Cys135. N-linked (GlcNAc...) asparagine glycosylation occurs at Asn139. The disordered stretch occupies residues 139 to 161 (NGSGSGEGEEEGSGAGAHRKHSK). The 49-residue stretch at 181–229 (VCNIDCSGYSFNPVCASDGSSYNNPCFVREASCIKQEQIDIRHLGHCTD) folds into the Kazal-like 2 domain. 6 cysteine pairs are disulfide-bonded: Cys182–Cys213, Cys186–Cys206, Cys195–Cys227, Cys267–Cys280, Cys275–Cys291, and Cys293–Cys302. The EGF-like domain occupies 263-303 (SHMPCPENLNGYCIHGKCEFIYSTQKASCRCESGYTGQHCE). A helical transmembrane segment spans residues 323-343 (LIAAIIGAVQIAIIVAIVMCI). Residues 344 to 372 (TRKCPKNNRGRRQKQNLGHFTSDTSSRMV) lie on the Cytoplasmic side of the membrane. Residues 351 to 372 (NRGRRQKQNLGHFTSDTSSRMV) form a disordered region. The span at 358 to 372 (QNLGHFTSDTSSRMV) shows a compositional bias: polar residues.

Belongs to the tomoregulin family. May interact with ST14. As to expression, maily expressed in neurons. Expressed in brain, neurointermediate lobe, pars distalis, pancreas, ovary and testis.

Its subcellular location is the cell membrane. Neuron-specific restriction factor that prevents herpes simplex virus 1 (HHV-1) infection in the brain by blocking viral entry. Also able to restrict herpes simplex virus 2 (HHV-2) infection, although to a lesser extent. Acts by preventing the association between the viral glycoprotein D (gD) and its cell surface receptor NECTIN1, thereby inhibiting fusion of the virus and the cell membrane. Also able to prevent the association between the viral glycoprotein B (gB) and MYH9/NMMHC-IIA and MYH10/NMMHC-IIB receptors. This Mus musculus (Mouse) protein is Tomoregulin-1.